We begin with the raw amino-acid sequence, 309 residues long: Glutaminase (309 aa).

Substrate is bound by residues Ser-64, Asn-114, Glu-160, Asn-167, Tyr-191, Tyr-243, and Val-261.

It belongs to the glutaminase family. As to quaternary structure, homotetramer.

It carries out the reaction L-glutamine + H2O = L-glutamate + NH4(+). This Methylobacterium sp. (strain 4-46) protein is Glutaminase.